Reading from the N-terminus, the 374-residue chain is Pulmonary surfactant-associated protein D (374 aa).

Positions 1 to 19 (MLHFLSMLVLLVQPLGDLG) are cleaved as a signal peptide. An S-nitrosocysteine mark is found at Cys-34 and Cys-39. Positions 40 to 221 (SPTENGLPGR…RGIKGESGLP (182 aa)) are disordered. A Collagen-like domain is found at 45–221 (GLPGRDGRDG…RGIKGESGLP (177 aa)). Basic and acidic residues predominate over residues 49–64 (RDGRDGREGPRGEKGD). Hydroxyproline is present on Pro-77. Lys-86 is modified (5-hydroxylysine). The N-linked (GlcNAc...) asparagine glycan is linked to Asn-89. A Hydroxyproline modification is found at Pro-95. Lys-98 carries the 5-hydroxylysine modification. Ser-109 is subject to Phosphoserine. Composition is skewed to low complexity over residues 137–163 (KGEA…PAGP) and 170–200 (PGEQ…RGPP). Hydroxyproline is present on residues Pro-170 and Pro-176. Basic and acidic residues predominate over residues 203-215 (KGDRGAPGDRGIK). Residues 222–253 (DSAALRQQMEALNGKLQRLEAAFSRYKKAALF) adopt a coiled-coil conformation. In terms of domain architecture, C-type lectin spans 259–374 (VGDKIFRAAN…GEQRLVICEF (116 aa)). 2 disulfide bridges follow: Cys-280–Cys-372 and Cys-350–Cys-364.

Belongs to the SFTPD family. In terms of assembly, oligomeric complex of 4 set of homotrimers. S-nitrosylation at Cys-34 and Cys-39 alters the quaternary structure which results in a pro-inflammatory chemoattractive signaling activity with macrophages.

The protein localises to the secreted. Its subcellular location is the extracellular space. The protein resides in the extracellular matrix. It is found in the surface film. In terms of biological role, contributes to the lung's defense against inhaled microorganisms, organic antigens and toxins. Interacts with compounds such as bacterial lipopolysaccharides, oligosaccharides and fatty acids and modulates leukocyte action in immune response. May participate in the extracellular reorganization or turnover of pulmonary surfactant. Binds strongly maltose residues and to a lesser extent other alpha-glucosyl moieties. This is Pulmonary surfactant-associated protein D (Sftpd) from Rattus norvegicus (Rat).